The primary structure comprises 205 residues: Red chlorophyll catabolite reductase (205 aa).

Substrate is bound by residues glutamate 39 and aspartate 175.

Homodimer. In terms of processing, the N-terminus is blocked. As to expression, in etiolated and green primary leaves. Low amount in roots.

The protein localises to the plastid. Its subcellular location is the chloroplast stroma. The enzyme catalyses primary fluorescent chlorophyll catabolite + 2 oxidized [2Fe-2S]-[ferredoxin] = red chlorophyll catabolite + 2 reduced [2Fe-2S]-[ferredoxin] + 3 H(+). Its pathway is porphyrin-containing compound metabolism; chlorophyll degradation. Catalyzes the key reaction of chlorophyll catabolism, porphyrin macrocycle cleavage of pheophorbide a (pheide a) to a primary fluorescent catabolite (pFCC). Works in a two-step reaction with pheophorbide a oxygenase (PaO) by reducing the C20/C1 double bond of the intermediate, RCC. This chain is Red chlorophyll catabolite reductase (rccR), found in Hordeum vulgare (Barley).